We begin with the raw amino-acid sequence, 173 residues long: NAD(P)H-quinone oxidoreductase subunit J (173 aa).

This sequence belongs to the complex I 30 kDa subunit family. NDH-1 can be composed of about 15 different subunits; different subcomplexes with different compositions have been identified which probably have different functions.

The protein localises to the cellular thylakoid membrane. The enzyme catalyses a plastoquinone + NADH + (n+1) H(+)(in) = a plastoquinol + NAD(+) + n H(+)(out). It catalyses the reaction a plastoquinone + NADPH + (n+1) H(+)(in) = a plastoquinol + NADP(+) + n H(+)(out). Its function is as follows. NDH-1 shuttles electrons from an unknown electron donor, via FMN and iron-sulfur (Fe-S) centers, to quinones in the respiratory and/or the photosynthetic chain. The immediate electron acceptor for the enzyme in this species is believed to be plastoquinone. Couples the redox reaction to proton translocation, and thus conserves the redox energy in a proton gradient. Cyanobacterial NDH-1 also plays a role in inorganic carbon-concentration. This is NAD(P)H-quinone oxidoreductase subunit J from Prochlorococcus marinus (strain NATL1A).